The primary structure comprises 138 residues: Acidic phospholipase A2 pgPLA 1b/pgPLA 2b (138 aa).

Positions 1–16 are cleaved as a signal peptide; it reads MRTLWIMAVLLVGVKG. Cystine bridges form between cysteine 42-cysteine 131, cysteine 44-cysteine 60, cysteine 59-cysteine 111, cysteine 65-cysteine 138, cysteine 66-cysteine 104, cysteine 73-cysteine 97, and cysteine 91-cysteine 102. Ca(2+)-binding residues include tyrosine 43, glycine 45, and glycine 47. Histidine 63 is an active-site residue. Aspartate 64 is a binding site for Ca(2+). The active site involves aspartate 105.

The protein belongs to the phospholipase A2 family. Group II subfamily. D49 sub-subfamily. Ca(2+) serves as cofactor. Expressed by the venom gland.

Its subcellular location is the secreted. It catalyses the reaction a 1,2-diacyl-sn-glycero-3-phosphocholine + H2O = a 1-acyl-sn-glycero-3-phosphocholine + a fatty acid + H(+). Functionally, PLA2 catalyzes the calcium-dependent hydrolysis of the 2-acyl groups in 3-sn-phosphoglycerides. The polypeptide is Acidic phospholipase A2 pgPLA 1b/pgPLA 2b (Protobothrops flavoviridis (Habu)).